Reading from the N-terminus, the 138-residue chain is Small ribosomal subunit protein uS11c (138 aa).

Positions 1–22 are disordered; that stretch reads MAKPILRIGSRKNTRSGSRKNV. Residues 9–22 are compositionally biased toward basic residues; it reads GSRKNTRSGSRKNV.

The protein belongs to the universal ribosomal protein uS11 family. Part of the 30S ribosomal subunit.

It localises to the plastid. The protein localises to the chloroplast. The protein is Small ribosomal subunit protein uS11c of Arabis hirsuta (Hairy rock-cress).